Reading from the N-terminus, the 364-residue chain is Chorismate synthase (364 aa).

The disordered stretch occupies residues 41–60 (MQHDLDRRRPGTSRYTTARR). Residues Arg-48 and Arg-54 each contribute to the NADP(+) site. FMN is bound by residues 125–127 (RSS), 238–239 (NA), Gly-278, 293–297 (KPTSS), and Arg-319.

Belongs to the chorismate synthase family. In terms of assembly, homotetramer. It depends on FMNH2 as a cofactor.

The enzyme catalyses 5-O-(1-carboxyvinyl)-3-phosphoshikimate = chorismate + phosphate. It functions in the pathway metabolic intermediate biosynthesis; chorismate biosynthesis; chorismate from D-erythrose 4-phosphate and phosphoenolpyruvate: step 7/7. Its function is as follows. Catalyzes the anti-1,4-elimination of the C-3 phosphate and the C-6 proR hydrogen from 5-enolpyruvylshikimate-3-phosphate (EPSP) to yield chorismate, which is the branch point compound that serves as the starting substrate for the three terminal pathways of aromatic amino acid biosynthesis. This reaction introduces a second double bond into the aromatic ring system. This chain is Chorismate synthase, found in Shewanella sp. (strain ANA-3).